A 447-amino-acid chain; its full sequence is Histidine--tRNA ligase (447 aa).

The protein belongs to the class-II aminoacyl-tRNA synthetase family. In terms of assembly, homodimer.

It is found in the cytoplasm. It catalyses the reaction tRNA(His) + L-histidine + ATP = L-histidyl-tRNA(His) + AMP + diphosphate + H(+). The sequence is that of Histidine--tRNA ligase (hisS) from Synechocystis sp. (strain ATCC 27184 / PCC 6803 / Kazusa).